A 489-amino-acid chain; its full sequence is Glycogen synthase (489 aa).

Arg20 is a binding site for ADP-alpha-D-glucose.

This sequence belongs to the glycosyltransferase 1 family. Bacterial/plant glycogen synthase subfamily.

The catalysed reaction is [(1-&gt;4)-alpha-D-glucosyl](n) + ADP-alpha-D-glucose = [(1-&gt;4)-alpha-D-glucosyl](n+1) + ADP + H(+). Its pathway is glycan biosynthesis; glycogen biosynthesis. Its function is as follows. Synthesizes alpha-1,4-glucan chains using ADP-glucose. This is Glycogen synthase from Chlorobium limicola (strain DSM 245 / NBRC 103803 / 6330).